The sequence spans 359 residues: Methylthioribose-1-phosphate isomerase (359 aa).

Substrate contacts are provided by residues 50–52 (RGA), arginine 93, and glutamine 200. The Proton donor role is filled by aspartate 241. 251–252 (NK) provides a ligand contact to substrate.

This sequence belongs to the eIF-2B alpha/beta/delta subunits family. MtnA subfamily.

It catalyses the reaction 5-(methylsulfanyl)-alpha-D-ribose 1-phosphate = 5-(methylsulfanyl)-D-ribulose 1-phosphate. It functions in the pathway amino-acid biosynthesis; L-methionine biosynthesis via salvage pathway; L-methionine from S-methyl-5-thio-alpha-D-ribose 1-phosphate: step 1/6. In terms of biological role, catalyzes the interconversion of methylthioribose-1-phosphate (MTR-1-P) into methylthioribulose-1-phosphate (MTRu-1-P). The chain is Methylthioribose-1-phosphate isomerase from Symbiobacterium thermophilum (strain DSM 24528 / JCM 14929 / IAM 14863 / T).